A 183-amino-acid chain; its full sequence is Shikimate kinase (183 aa).

25 to 30 (GAGKTT) serves as a coordination point for ATP. Thr29 provides a ligand contact to Mg(2+). The substrate site is built by Asp47, Arg71, and Gly93. ATP is bound at residue Arg131. Arg150 provides a ligand contact to substrate.

Belongs to the shikimate kinase family. Monomer. Requires Mg(2+) as cofactor.

It is found in the cytoplasm. It catalyses the reaction shikimate + ATP = 3-phosphoshikimate + ADP + H(+). It participates in metabolic intermediate biosynthesis; chorismate biosynthesis; chorismate from D-erythrose 4-phosphate and phosphoenolpyruvate: step 5/7. Its function is as follows. Catalyzes the specific phosphorylation of the 3-hydroxyl group of shikimic acid using ATP as a cosubstrate. The sequence is that of Shikimate kinase from Dechloromonas aromatica (strain RCB).